The primary structure comprises 247 residues: MFISTNEKSEIKYSRVLFKISGEALMGSKQFGHDMEAIGELSKGIVEVCNLGVQVCIVVGGGNIFRGTSASLSGCERASSDYIGMLATIINALILQNFLEKNLVASRVLSAIPMATVCEPYIRRKAIRHLEKGRVVIFAAGTGNPFFTTDTAAALRAVEMNCDVILKGTQVNGVYSADPKKNEDAVMYDRLSYTDLLTRDLKVMDASAISLARENSIPIIVFSLKGEKIVNIIKGQGTYTIVSDCKQ.

19–22 (KISG) serves as a coordination point for ATP. Gly-61 serves as a coordination point for UMP. 2 residues coordinate ATP: Gly-62 and Arg-66. Residues Asp-81 and 142–149 (TGNPFFTT) contribute to the UMP site. ATP-binding residues include Thr-169, Gln-170, Tyr-175, and Asp-178.

It belongs to the UMP kinase family. In terms of assembly, homohexamer.

It is found in the cytoplasm. The enzyme catalyses UMP + ATP = UDP + ADP. Its pathway is pyrimidine metabolism; CTP biosynthesis via de novo pathway; UDP from UMP (UMPK route): step 1/1. Inhibited by UTP. Functionally, catalyzes the reversible phosphorylation of UMP to UDP. The chain is Uridylate kinase from Wolbachia pipientis wMel.